The primary structure comprises 137 residues: Nucleoside diphosphate kinase (137 aa).

ATP is bound by residues Lys9, Phe57, Arg85, Thr91, Arg102, and Asn112. Catalysis depends on His115, which acts as the Pros-phosphohistidine intermediate.

This sequence belongs to the NDK family. As to quaternary structure, homotetramer. Mg(2+) serves as cofactor.

It is found in the cytoplasm. It catalyses the reaction a 2'-deoxyribonucleoside 5'-diphosphate + ATP = a 2'-deoxyribonucleoside 5'-triphosphate + ADP. The enzyme catalyses a ribonucleoside 5'-diphosphate + ATP = a ribonucleoside 5'-triphosphate + ADP. Major role in the synthesis of nucleoside triphosphates other than ATP. The ATP gamma phosphate is transferred to the NDP beta phosphate via a ping-pong mechanism, using a phosphorylated active-site intermediate. The chain is Nucleoside diphosphate kinase from Pelobacter propionicus (strain DSM 2379 / NBRC 103807 / OttBd1).